Consider the following 126-residue polypeptide: Small ribosomal subunit protein uS12 (126 aa).

Over residues 1 to 16 (MPTVNQLVRQGRTMNK) the composition is skewed to polar residues. The disordered stretch occupies residues 1–24 (MPTVNQLVRQGRTMNKTKTKSPAL). Residue Asp89 is modified to 3-methylthioaspartic acid.

The protein belongs to the universal ribosomal protein uS12 family. Part of the 30S ribosomal subunit. Contacts proteins S8 and S17. May interact with IF1 in the 30S initiation complex.

Functionally, with S4 and S5 plays an important role in translational accuracy. Its function is as follows. Interacts with and stabilizes bases of the 16S rRNA that are involved in tRNA selection in the A site and with the mRNA backbone. Located at the interface of the 30S and 50S subunits, it traverses the body of the 30S subunit contacting proteins on the other side and probably holding the rRNA structure together. The combined cluster of proteins S8, S12 and S17 appears to hold together the shoulder and platform of the 30S subunit. This Elusimicrobium minutum (strain Pei191) protein is Small ribosomal subunit protein uS12.